Here is a 374-residue protein sequence, read N- to C-terminus: 2-oxoglutarate-Fe(II) type oxidoreductase ppzC (374 aa).

The segment at 111-131 (KKGPFDSGYRGPGTQRVNPDE) is disordered. The Fe2OG dioxygenase domain occupies 220 to 330 (YPDASLEINF…RVSMPFFWGF (111 aa)). Residues His254, Asp256, and His311 each coordinate Fe cation. Residue Arg321 participates in 2-oxoglutarate binding.

It belongs to the iron/ascorbate-dependent oxidoreductase family. Requires Fe(2+) as cofactor.

The catalysed reaction is peramine + 2-oxoglutarate + O2 = 8-hydroxyperamine + succinate + CO2. It functions in the pathway secondary metabolite biosynthesis. 2-oxoglutarate-Fe(II) type oxidoreductase; part of the gene cluster that mediates the biosynthesis of pyrrolopyrazines, secondary metabolites showing insecticidal activity. Within the pathway, ppzC uses peramine as substrate for hydroxylation to yield the novel analog 8-hydroxyperamine. The single multifunctional NRPS ppzA is sufficient to produce peramine via condensation of 1-pyrroline-5-carboxylate and arginine, N-methylation of the alpha-amino group of arginine and reduction of the thioester and the cyclization to form an iminium ion resulting in release from the peptide synthetase. Deprotonation of this intermediate and oxidation of the pyrroline ring would give rise to peramine. In Epichloe species that produce only peramine, the peramine synthetase gene is not localized in a gene cluster, in contrast to Metarhizium species that contain additional pyrrolopyrazine biosynthesis genes. The 2-oxoglutarate-Fe(II) type oxidoreductase ppzC hydroxylates peramine to yield the newly identified compound 8-hydroxyperamine whereas ppzD converts L-proline into trans-4-hydroxy-L-proline, a precursor of peramine biosynthesis. This chain is 2-oxoglutarate-Fe(II) type oxidoreductase ppzC (ppzC), found in Metarhizium majus (strain ARSEF 297).